Reading from the N-terminus, the 142-residue chain is Large ribosomal subunit protein uL13 (142 aa).

Belongs to the universal ribosomal protein uL13 family. As to quaternary structure, part of the 50S ribosomal subunit.

This protein is one of the early assembly proteins of the 50S ribosomal subunit, although it is not seen to bind rRNA by itself. It is important during the early stages of 50S assembly. This chain is Large ribosomal subunit protein uL13, found in Stenotrophomonas maltophilia (strain R551-3).